We begin with the raw amino-acid sequence, 213 residues long: Orotate phosphoribosyltransferase (213 aa).

Lys-26 contributes to the 5-phospho-alpha-D-ribose 1-diphosphate binding site. 34–35 (FF) contacts orotate. 5-phospho-alpha-D-ribose 1-diphosphate-binding positions include 72–73 (YK), Arg-99, Lys-100, Lys-103, His-105, and 124–132 (DDVITAGTA). Positions 128 and 156 each coordinate orotate.

It belongs to the purine/pyrimidine phosphoribosyltransferase family. PyrE subfamily. As to quaternary structure, homodimer. It depends on Mg(2+) as a cofactor.

The catalysed reaction is orotidine 5'-phosphate + diphosphate = orotate + 5-phospho-alpha-D-ribose 1-diphosphate. It participates in pyrimidine metabolism; UMP biosynthesis via de novo pathway; UMP from orotate: step 1/2. Functionally, catalyzes the transfer of a ribosyl phosphate group from 5-phosphoribose 1-diphosphate to orotate, leading to the formation of orotidine monophosphate (OMP). This Serratia proteamaculans (strain 568) protein is Orotate phosphoribosyltransferase.